The primary structure comprises 331 residues: Gamma-parvin (331 aa).

Position 1 is an N-acetylmethionine (M1). Residues 18–38 (QPTEEELPRGGKKKYLSPNSK) are disordered. Calponin-homology (CH) domains are found at residues 44 to 151 (EELQ…KRFQ) and 210 to 317 (HAVQ…QKHS).

Belongs to the parvin family. As to quaternary structure, interacts with ILK; the interaction promotes the establishment of cell polarity required for leukocyte migration. Interacts with ARHGEF6; the guanine nucleotide exchange factor activity of ARHGEF6 is essential for the PARVG-induced enhancement of cell spreading. In terms of tissue distribution, expressed strongly in spleen and testis, moderately in lung and weakly in brain and heart.

It localises to the cell junction. Its subcellular location is the focal adhesion. The protein localises to the cell membrane. It is found in the cytoplasm. The protein resides in the cytoskeleton. In terms of biological role, plays a role with ILK in promoting the cell adhesion and spreading of leukocytes. This chain is Gamma-parvin (Parvg), found in Mus musculus (Mouse).